The primary structure comprises 417 residues: Serine--tRNA ligase (417 aa).

224 to 226 (TSE) is an L-serine binding site. Residues 255 to 257 (RRE) and valine 271 contribute to the ATP site. Position 278 (glutamate 278) interacts with L-serine. 342 to 345 (ELTS) serves as a coordination point for ATP. Residue threonine 377 participates in L-serine binding.

Belongs to the class-II aminoacyl-tRNA synthetase family. Type-1 seryl-tRNA synthetase subfamily. In terms of assembly, homodimer. The tRNA molecule binds across the dimer.

The protein resides in the cytoplasm. It catalyses the reaction tRNA(Ser) + L-serine + ATP = L-seryl-tRNA(Ser) + AMP + diphosphate + H(+). The catalysed reaction is tRNA(Sec) + L-serine + ATP = L-seryl-tRNA(Sec) + AMP + diphosphate + H(+). The protein operates within aminoacyl-tRNA biosynthesis; selenocysteinyl-tRNA(Sec) biosynthesis; L-seryl-tRNA(Sec) from L-serine and tRNA(Sec): step 1/1. Functionally, catalyzes the attachment of serine to tRNA(Ser). Is also able to aminoacylate tRNA(Sec) with serine, to form the misacylated tRNA L-seryl-tRNA(Sec), which will be further converted into selenocysteinyl-tRNA(Sec). The chain is Serine--tRNA ligase from Mycobacterium leprae (strain TN).